Consider the following 210-residue polypeptide: Probable sporulation protein YtaF (210 aa).

A run of 6 helical transmembrane segments spans residues 6–26, 36–56, 69–89, 129–149, 162–184, and 190–210; these read ILLLALAVSLDSFSVGFTYGL, ILVIACCSGAVMFISMLIGSF, LGGLILVGIGAWVLYQFFKPA, VINGIEAVLLGFALSIDAFGA, VMSIAVAIMSSLFVSIGINAGHF, and WIDKMAFLPGLLLITIGLWKL.

The protein resides in the cell membrane. The sequence is that of Probable sporulation protein YtaF (ytaF) from Bacillus subtilis (strain 168).